The sequence spans 401 residues: Lipoyl synthase 1, mitochondrial (401 aa).

The transit peptide at 1 to 25 (MWSSSSSLCRNPSFRRAWLSTVTVT) directs the protein to the mitochondrion. The interval 49 to 79 (IDDFSSTNAPTTTTHYTSSNGSPIVRQKAAP) is disordered. Over residues 51–70 (DFSSTNAPTTTTHYTSSNGS) the composition is skewed to polar residues. The [4Fe-4S] cluster site is built by C117, C122, C128, C148, C152, C155, and S376. One can recognise a Radical SAM core domain in the interval 133 to 365 (EDQTATATIM…QETAMGMGFA (233 aa)).

This sequence belongs to the radical SAM superfamily. Lipoyl synthase family. The cofactor is [4Fe-4S] cluster.

It localises to the mitochondrion. The catalysed reaction is [[Fe-S] cluster scaffold protein carrying a second [4Fe-4S](2+) cluster] + N(6)-octanoyl-L-lysyl-[protein] + 2 oxidized [2Fe-2S]-[ferredoxin] + 2 S-adenosyl-L-methionine + 4 H(+) = [[Fe-S] cluster scaffold protein] + N(6)-[(R)-dihydrolipoyl]-L-lysyl-[protein] + 4 Fe(3+) + 2 hydrogen sulfide + 2 5'-deoxyadenosine + 2 L-methionine + 2 reduced [2Fe-2S]-[ferredoxin]. It functions in the pathway protein modification; protein lipoylation via endogenous pathway; protein N(6)-(lipoyl)lysine from octanoyl-[acyl-carrier-protein]: step 2/2. In terms of biological role, catalyzes the radical-mediated insertion of two sulfur atoms into the C-6 and C-8 positions of the octanoyl moiety bound to the lipoyl domains of lipoate-dependent enzymes, thereby converting the octanoylated domains into lipoylated derivatives. The polypeptide is Lipoyl synthase 1, mitochondrial (Phaeodactylum tricornutum (strain CCAP 1055/1)).